A 204-amino-acid polypeptide reads, in one-letter code: Pro-glucagon (204 aa).

The first 20 residues, 1–20, serve as a signal peptide directing secretion; sequence MTSMYFVAGLLLMIVQGSWQ. A propeptide spanning residues 84-109 is cleaved from the precursor; that stretch reads SGQQGVEEREKENLLDQLSSNGLARH. Position 145 is an arginine amide (Arg145). 2 consecutive propeptides follow at residues 149 to 161 and 197 to 204; these read DFLE…DDIG and RDLLGEYQ.

It belongs to the glucagon family. In terms of tissue distribution, isoform LPII is expressed in both pancreas and intestine. Expression of isoform LPI is restricted to the pancreas. Neither isoform is detected in salivary glands.

Its subcellular location is the secreted. Its function is as follows. Plays a key role in glucose metabolism and homeostasis. Regulates blood glucose by increasing gluconeogenesis and decreasing glycolysis. In terms of biological role, potent stimulator of glucose-dependent insulin release. Plays important roles on gastric motility and the suppression of plasma glucagon levels. Stimulates intestinal growth and up-regulates villus height in the small intestine, concomitant with increased crypt cell proliferation and decreased enterocyte apoptosis. This chain is Pro-glucagon (GCG), found in Heloderma suspectum (Gila monster).